Here is a 307-residue protein sequence, read N- to C-terminus: MDSRGFDSEGREFSSATEMWAHEIGAAADAPVSAAVAEPAPAPAAGSNGVAGEEEAGGGGKREEWYSKAIAYWQGVEASTEGVLGGYGCVNDVDVKGSDAFLRPLLAERFGAARRHLVALDCGSGIGRVTKNFLLRHFNEVDLVEPVSHFLEAAQENLTECMEVGEDTHKAANFYCVPLQDFTPDEGRYDVIWIQWCIGQLPDDDFISFFNRAKIGLKPNGFFVLKENIARNGFVLDKEDNSITRSDAYFKELFKKCGLYIHSIKDQSDLPKELFAVKMYALVTEKPKIQKNGKRRRPKNSPRMIRS.

Over residues 38–51 (EPAPAPAAGSNGVA) the composition is skewed to low complexity. The disordered stretch occupies residues 38–60 (EPAPAPAAGSNGVAGEEEAGGGG). S-adenosyl-L-methionine-binding positions include G123, R128, 145–147 (EPV), 179–180 (LQ), and Q195.

This sequence belongs to the methyltransferase superfamily. NTM1 family.

It catalyses the reaction N-terminal L-alanyl-L-prolyl-L-lysyl-[protein] + 3 S-adenosyl-L-methionine = N-terminal N,N,N-trimethyl-L-alanyl-L-prolyl-L-lysyl-[protein] + 3 S-adenosyl-L-homocysteine + 3 H(+). The enzyme catalyses N-terminal L-seryl-L-prolyl-L-lysyl-[protein] + 3 S-adenosyl-L-methionine = N-terminal N,N,N-trimethyl-L-seryl-L-prolyl-L-lysyl-[protein] + 3 S-adenosyl-L-homocysteine + 3 H(+). The catalysed reaction is N-terminal L-prolyl-L-prolyl-L-lysyl-[protein] + 2 S-adenosyl-L-methionine = N-terminal N,N-dimethyl-L-prolyl-L-prolyl-L-lysyl-[protein] + 2 S-adenosyl-L-homocysteine + 2 H(+). In terms of biological role, alpha-N-methyltransferase that methylates the N-terminus of target proteins containing the N-terminal motif [Ala/Pro/Ser]-Pro-Lys when the initiator Met is cleaved. Specifically catalyzes mono-, di- or tri-methylation of exposed alpha-amino group of Ala or Ser residue in the [Ala/Ser]-Pro-Lys motif and mono- or di-methylation of Pro in the Pro-Pro-Lys motif. This is Alpha N-terminal protein methyltransferase 1 from Oryza sativa subsp. japonica (Rice).